Consider the following 368-residue polypeptide: MASLTGAKRVVVKIGSALLVDRHTGDLRADWLAALADDIAALKGAGTDVILVSSGAIALGRGVLALGDGALSLDEAQAAAAVGQIRLARAYEEVLAPLGLTSAQILLTLDDSADRRRYLNTRATFAALLARGAVPIVNENDTIATDEIRYGDNDRLAANVAVMAGADICVLLSDVDGLYTANPNDDTTAAHLPVIDTITPEIEAMAGDAGSGLSKGGMKTKVLAARTATAAGCAMAITQGAIANPLRALDDGARATWFTATVSPQQARKAWIGAMKPKGSLRLDAGAAAALSRGKSLLPAGVVAVTGDFLRGDPVRLEAPDGAAIGIGLSRYGAKEALAIQGHQSDEIPEILGYPGRAALVHRDDMVL.

Lysine 13 is an ATP binding site. Positions 54, 141, and 153 each coordinate substrate. 173–174 (SD) contacts ATP. One can recognise a PUA domain in the interval 278 to 355 (KGSLRLDAGA…DEIPEILGYP (78 aa)).

The protein belongs to the glutamate 5-kinase family.

It is found in the cytoplasm. It catalyses the reaction L-glutamate + ATP = L-glutamyl 5-phosphate + ADP. It functions in the pathway amino-acid biosynthesis; L-proline biosynthesis; L-glutamate 5-semialdehyde from L-glutamate: step 1/2. In terms of biological role, catalyzes the transfer of a phosphate group to glutamate to form L-glutamate 5-phosphate. The polypeptide is Glutamate 5-kinase (Jannaschia sp. (strain CCS1)).